A 244-amino-acid polypeptide reads, in one-letter code: Biosynthetic peptidoglycan transglycosylase (244 aa).

Residues L25–Y45 form a helical membrane-spanning segment.

This sequence belongs to the glycosyltransferase 51 family.

The protein localises to the cell inner membrane. It carries out the reaction [GlcNAc-(1-&gt;4)-Mur2Ac(oyl-L-Ala-gamma-D-Glu-L-Lys-D-Ala-D-Ala)](n)-di-trans,octa-cis-undecaprenyl diphosphate + beta-D-GlcNAc-(1-&gt;4)-Mur2Ac(oyl-L-Ala-gamma-D-Glu-L-Lys-D-Ala-D-Ala)-di-trans,octa-cis-undecaprenyl diphosphate = [GlcNAc-(1-&gt;4)-Mur2Ac(oyl-L-Ala-gamma-D-Glu-L-Lys-D-Ala-D-Ala)](n+1)-di-trans,octa-cis-undecaprenyl diphosphate + di-trans,octa-cis-undecaprenyl diphosphate + H(+). The protein operates within cell wall biogenesis; peptidoglycan biosynthesis. Its function is as follows. Peptidoglycan polymerase that catalyzes glycan chain elongation from lipid-linked precursors. The protein is Biosynthetic peptidoglycan transglycosylase of Nitrosomonas eutropha (strain DSM 101675 / C91 / Nm57).